Here is a 207-residue protein sequence, read N- to C-terminus: Thymidylate kinase (207 aa).

7-14 (GCEGTGKT) is an ATP binding site.

The protein belongs to the thymidylate kinase family.

It carries out the reaction dTMP + ATP = dTDP + ADP. In terms of biological role, phosphorylation of dTMP to form dTDP in both de novo and salvage pathways of dTTP synthesis. In Onion yellows phytoplasma (strain OY-M), this protein is Thymidylate kinase.